An 85-amino-acid chain; its full sequence is Large ribosomal subunit protein bL27 (85 aa).

The interval 1–21 is disordered; the sequence is MAHKKGQGSTQNNRDSAGRRL.

Belongs to the bacterial ribosomal protein bL27 family.

The polypeptide is Large ribosomal subunit protein bL27 (Nitratiruptor sp. (strain SB155-2)).